An 817-amino-acid chain; its full sequence is Leucine--tRNA ligase (817 aa).

Positions 51–61 (PYPSGDLHVGH) match the 'HIGH' region motif. Residues 588–592 (RMSKS) carry the 'KMSKS' region motif. Lys591 serves as a coordination point for ATP.

This sequence belongs to the class-I aminoacyl-tRNA synthetase family.

Its subcellular location is the cytoplasm. The catalysed reaction is tRNA(Leu) + L-leucine + ATP = L-leucyl-tRNA(Leu) + AMP + diphosphate. The protein is Leucine--tRNA ligase of Rubrobacter xylanophilus (strain DSM 9941 / JCM 11954 / NBRC 16129 / PRD-1).